A 70-amino-acid chain; its full sequence is Guanine nucleotide-binding protein G(I)/G(S)/G(O) subunit gamma-8 (70 aa).

Cysteine 67 carries the post-translational modification Cysteine methyl ester. A lipid anchor (S-geranylgeranyl cysteine) is attached at cysteine 67. Residues 68 to 70 constitute a propeptide, removed in mature form; the sequence is VLL.

The protein belongs to the G protein gamma family. In terms of assembly, g proteins are composed of 3 units, alpha, beta and gamma.

It is found in the cell membrane. Functionally, guanine nucleotide-binding proteins (G proteins) are involved as a modulator or transducer in various transmembrane signaling systems. The beta and gamma chains are required for the GTPase activity, for replacement of GDP by GTP, and for G protein-effector interaction. This chain is Guanine nucleotide-binding protein G(I)/G(S)/G(O) subunit gamma-8 (GNG8), found in Homo sapiens (Human).